Reading from the N-terminus, the 126-residue chain is Flagellar assembly factor FliW (126 aa).

The protein belongs to the FliW family. Interacts with translational regulator CsrA and flagellin(s).

It localises to the cytoplasm. Its function is as follows. Acts as an anti-CsrA protein, binds CsrA and prevents it from repressing translation of its target genes, one of which is flagellin. Binds to flagellin and participates in the assembly of the flagellum. The chain is Flagellar assembly factor FliW from Sulfurimonas denitrificans (strain ATCC 33889 / DSM 1251) (Thiomicrospira denitrificans (strain ATCC 33889 / DSM 1251)).